Consider the following 350-residue polypeptide: Twinfilin-1 (350 aa).

S2 is modified (N-acetylserine). An ADF-H 1 domain is found at 2–139 (SHQTGIQASE…SLHGYKKYLL (138 aa)). 2 positions are modified to phosphoserine: S143 and S277. Residues 175–313 (LQGVAFPISR…TADFLYDEVH (139 aa)) enclose the ADF-H 2 domain. Y309 is modified (phosphotyrosine). The segment at 317–350 (HAHKQSFAKPKGPAGKRGIRRLIRGPAEAEATTD) is disordered. T349 carries the post-translational modification Phosphothreonine.

The protein belongs to the actin-binding proteins ADF family. Twinfilin subfamily. As to quaternary structure, interacts with G-actin; ADP-actin form and capping protein (CP). May also be able to interact with TWF2 and phosphoinositides, PI(4,5)P2. When bound to PI(4,5)P2, it is down-regulated. Interacts with ACTG1. Phosphorylated on serine and threonine residues. Widely expressed with highest levels in brain, liver and kidney. Also expressed in heart, lung and testis. Not detected in spleen or skeletal muscle.

Its subcellular location is the cytoplasm. The protein resides in the cytoskeleton. Actin-binding protein involved in motile and morphological processes. Inhibits actin polymerization, likely by sequestering G-actin. By capping the barbed ends of filaments, it also regulates motility. Seems to play an important role in clathrin-mediated endocytosis and distribution of endocytic organelles. The protein is Twinfilin-1 (Twf1) of Mus musculus (Mouse).